Here is a 30-residue protein sequence, read N- to C-terminus: LIM and SH3 domain protein 1 (30 aa).

Met1 bears the N-acetylmethionine mark. In terms of domain architecture, LIM zinc-binding spans 5 to 30 (CARCGKIVYPTEKVNCLDKFWHKACF).

As to quaternary structure, interacts with F-actin. Interacts with ANKRD54. Interacts with KBTBD10. Post-translationally, phosphorylated.

The protein resides in the cytoplasm. The protein localises to the cell cortex. It is found in the cytoskeleton. Its function is as follows. Plays an important role in the regulation of dynamic actin-based, cytoskeletal activities. Agonist-dependent changes in LASP1 phosphorylation may also serve to regulate actin-associated ion transport activities, not only in the parietal cell but also in certain other F-actin-rich secretory epithelial cell types. This Sus scrofa (Pig) protein is LIM and SH3 domain protein 1 (LASP1).